The chain runs to 223 residues: Small heat shock protein hspI, mitochondrial (223 aa).

The N-terminal 23 residues, 1 to 23 (MYKLSKTTPFFFRRAFLCGRRGG), are a transit peptide targeting the mitochondrion. Residues 109–223 (KTRGFRSPKT…YVKSTTINVQ (115 aa)) enclose the sHSP domain.

It belongs to the small heat shock protein (HSP20) family.

It is found in the mitochondrion. The polypeptide is Small heat shock protein hspI, mitochondrial (hspI) (Dictyostelium discoideum (Social amoeba)).